A 216-amino-acid chain; its full sequence is UPF0502 protein Ent638_1581 (216 aa).

The protein belongs to the UPF0502 family.

The sequence is that of UPF0502 protein Ent638_1581 from Enterobacter sp. (strain 638).